Reading from the N-terminus, the 158-residue chain is 6,7-dimethyl-8-ribityllumazine synthase (158 aa).

5-amino-6-(D-ribitylamino)uracil contacts are provided by residues phenylalanine 24, 58 to 60 (AFE), and 82 to 84 (AVI). 87–88 (GT) is a binding site for (2S)-2-hydroxy-3-oxobutyl phosphate. The Proton donor role is filled by histidine 90. A 5-amino-6-(D-ribitylamino)uracil-binding site is contributed by phenylalanine 115. Arginine 129 contacts (2S)-2-hydroxy-3-oxobutyl phosphate.

This sequence belongs to the DMRL synthase family. As to quaternary structure, forms an icosahedral capsid composed of 60 subunits, arranged as a dodecamer of pentamers.

The catalysed reaction is (2S)-2-hydroxy-3-oxobutyl phosphate + 5-amino-6-(D-ribitylamino)uracil = 6,7-dimethyl-8-(1-D-ribityl)lumazine + phosphate + 2 H2O + H(+). The protein operates within cofactor biosynthesis; riboflavin biosynthesis; riboflavin from 2-hydroxy-3-oxobutyl phosphate and 5-amino-6-(D-ribitylamino)uracil: step 1/2. Its function is as follows. Catalyzes the formation of 6,7-dimethyl-8-ribityllumazine by condensation of 5-amino-6-(D-ribitylamino)uracil with 3,4-dihydroxy-2-butanone 4-phosphate. This is the penultimate step in the biosynthesis of riboflavin. The chain is 6,7-dimethyl-8-ribityllumazine synthase from Pseudomonas putida (strain GB-1).